Here is a 35-residue protein sequence, read N- to C-terminus: Photosystem II reaction center protein T (35 aa).

Residues 3 to 23 (ALVYTFLLVSTLGIIFFAIFF) traverse the membrane as a helical segment.

The protein belongs to the PsbT family. PSII is composed of 1 copy each of membrane proteins PsbA, PsbB, PsbC, PsbD, PsbE, PsbF, PsbH, PsbI, PsbJ, PsbK, PsbL, PsbM, PsbT, PsbY, PsbZ, Psb30/Ycf12, at least 3 peripheral proteins of the oxygen-evolving complex and a large number of cofactors. It forms dimeric complexes.

It is found in the plastid. Its subcellular location is the chloroplast thylakoid membrane. Functionally, found at the monomer-monomer interface of the photosystem II (PS II) dimer, plays a role in assembly and dimerization of PSII. PSII is a light-driven water plastoquinone oxidoreductase, using light energy to abstract electrons from H(2)O, generating a proton gradient subsequently used for ATP formation. This chain is Photosystem II reaction center protein T, found in Cedrus deodara (Deodar cedar).